Consider the following 546-residue polypeptide: FAD-dependent monooxygenase (546 aa).

The signal sequence occupies residues 1-17; that stretch reads MYDVIVVGAGWCGLAAA. An FAD-binding site is contributed by I106. Residues N239 and N343 are each glycosylated (N-linked (GlcNAc...) asparagine).

Belongs to the FAD-binding monooxygenase family. Requires FAD as cofactor.

The protein operates within antifungal biosynthesis. Its function is as follows. FAD-dependent monooxygenase; part of the gene cluster that mediates the biosynthesis of the tetrahydropyranyl antifungal agent lanomycin that acts as an inhibitor of CYP51 and blocks the ergosterol biosynthesis. The biosynthesis probably begins with the formation of an hexaketide, followed by methionine mediated alkylation of C-2 and C-6, and methylation of the reduced C-3 oxygen, pyran forming reductive ring closure, oxygenation of C-4, beta-keto reduction, enoyl reduction and dehydration of the remaining oxygens, and finally, acylation with glycine to complete the biosynthesis. The polypeptide is FAD-dependent monooxygenase (Pyrenophora dematioidea (Helminthosporium dematioideum)).